The chain runs to 296 residues: Urease operon transcriptional activator (296 aa).

The 98-residue stretch at 171 to 268 folds into the HTH araC/xylS-type domain; sequence QAITHLITQE…NMTPSQFRLQ (98 aa). 2 consecutive DNA-binding regions (H-T-H motif) follow at residues 188 to 209 and 235 to 258; these read DDVA…NREG and VFQI…KRKY.

In terms of biological role, positive regulator of the expression of the urease operon. This chain is Urease operon transcriptional activator (ureR), found in Escherichia coli.